A 58-amino-acid polypeptide reads, in one-letter code: UPF0391 membrane protein ABO_0024 (58 aa).

Helical transmembrane passes span 4-24 and 28-48; these read WALTFLVVAIIAGVLGFGGIA and ASIAKIIFFIFLALLVISLVV.

This sequence belongs to the UPF0391 family.

It localises to the cell membrane. This Alcanivorax borkumensis (strain ATCC 700651 / DSM 11573 / NCIMB 13689 / SK2) protein is UPF0391 membrane protein ABO_0024.